A 269-amino-acid chain; its full sequence is MTHIPGIVITGASGRMGQMLVRTVTDSDKVRLVGALERPGHDWIGRDVGEAMGGQALGVAVTDDPLEAFAQAQAVIDFTAPAATLGFAALAAQARCVHVIGTTGMTAEQIAALEPAARHAVIVRAGNMSLGVNLLVQLTKKVAAALDEDFDIEVIEAHHHHKVDAPSGTALMLGEAAAEGRGVRLDDVADRARDGITGARTRGDIGFHAIRGGDIVGEHDVLFAAPGERIVLRHVASDRAVFARGALKAALWGQGKAPGHYDMVDVLGL.

NAD(+) contacts are provided by residues 11-16 and E37; that span reads GASGRM. R38 is a binding site for NADP(+). Residues 101–103 and 125–128 each bind NAD(+); these read GTT and AGNM. H158 serves as the catalytic Proton donor/acceptor. Residue H159 participates in (S)-2,3,4,5-tetrahydrodipicolinate binding. K162 serves as the catalytic Proton donor. 168–169 contacts (S)-2,3,4,5-tetrahydrodipicolinate; the sequence is GT.

Belongs to the DapB family.

Its subcellular location is the cytoplasm. It catalyses the reaction (S)-2,3,4,5-tetrahydrodipicolinate + NAD(+) + H2O = (2S,4S)-4-hydroxy-2,3,4,5-tetrahydrodipicolinate + NADH + H(+). The enzyme catalyses (S)-2,3,4,5-tetrahydrodipicolinate + NADP(+) + H2O = (2S,4S)-4-hydroxy-2,3,4,5-tetrahydrodipicolinate + NADPH + H(+). It functions in the pathway amino-acid biosynthesis; L-lysine biosynthesis via DAP pathway; (S)-tetrahydrodipicolinate from L-aspartate: step 4/4. Catalyzes the conversion of 4-hydroxy-tetrahydrodipicolinate (HTPA) to tetrahydrodipicolinate. In Ruegeria pomeroyi (strain ATCC 700808 / DSM 15171 / DSS-3) (Silicibacter pomeroyi), this protein is 4-hydroxy-tetrahydrodipicolinate reductase.